The primary structure comprises 253 residues: Bridging integrator 3 (253 aa).

A BAR domain is found at 9-232 (GQPKKQIVSK…LDQPGHSDEQ (224 aa)). Coiled-coil stretches lie at residues 16–57 (VSKT…AMSK) and 120–151 (SLNMAVKRREQALQDYGRLQAKVEKYEEKEKT). The interval 222-241 (QLDQPGHSDEQRERENETKL) is disordered. The segment covering 227-241 (GHSDEQRERENETKL) has biased composition (basic and acidic residues).

The protein localises to the cytoplasm. Its subcellular location is the cytoskeleton. In terms of biological role, involved in cytokinesis and septation where it has a role in the localization of F-actin. In Mus musculus (Mouse), this protein is Bridging integrator 3 (Bin3).